The chain runs to 203 residues: Secreted phosphoprotein 24 (203 aa).

Positions 1–23 are cleaved as a signal peptide; that stretch reads MEQAMLKTLALLVLGMHYWCATG. Intrachain disulfides connect Cys86-Cys96 and Cys109-Cys127. Ser90 bears the Phosphoserine mark. A phosphoserine mark is found at Ser137, Ser138, Ser162, Ser165, and Ser174.

Belongs to the SPP2 family. Phosphorylation sites are present in the extracellular medium.

The protein localises to the secreted. Functionally, could coordinate an aspect of bone turnover. The polypeptide is Secreted phosphoprotein 24 (Spp2) (Mus musculus (Mouse)).